Consider the following 215-residue polypeptide: ATP phosphoribosyltransferase (215 aa).

This sequence belongs to the ATP phosphoribosyltransferase family. Short subfamily. In terms of assembly, heteromultimer composed of HisG and HisZ subunits.

The protein localises to the cytoplasm. It catalyses the reaction 1-(5-phospho-beta-D-ribosyl)-ATP + diphosphate = 5-phospho-alpha-D-ribose 1-diphosphate + ATP. It participates in amino-acid biosynthesis; L-histidine biosynthesis; L-histidine from 5-phospho-alpha-D-ribose 1-diphosphate: step 1/9. Functionally, catalyzes the condensation of ATP and 5-phosphoribose 1-diphosphate to form N'-(5'-phosphoribosyl)-ATP (PR-ATP). Has a crucial role in the pathway because the rate of histidine biosynthesis seems to be controlled primarily by regulation of HisG enzymatic activity. This chain is ATP phosphoribosyltransferase, found in Acidithiobacillus ferrooxidans (strain ATCC 23270 / DSM 14882 / CIP 104768 / NCIMB 8455) (Ferrobacillus ferrooxidans (strain ATCC 23270)).